The chain runs to 467 residues: Glutamyl-tRNA reductase (467 aa).

Substrate is bound by residues 49–52 (TCNR), Ser109, 114–116 (EQQ), and Gln120. Cys50 acts as the Nucleophile in catalysis. An NADP(+)-binding site is contributed by 189–194 (GAGAMG). Positions 446-467 (GFSDTTRYGTSPAQSSSKYHAE) are disordered. A compositionally biased stretch (polar residues) spans 447–467 (FSDTTRYGTSPAQSSSKYHAE).

Belongs to the glutamyl-tRNA reductase family. As to quaternary structure, homodimer.

It catalyses the reaction (S)-4-amino-5-oxopentanoate + tRNA(Glu) + NADP(+) = L-glutamyl-tRNA(Glu) + NADPH + H(+). Its pathway is porphyrin-containing compound metabolism; protoporphyrin-IX biosynthesis; 5-aminolevulinate from L-glutamyl-tRNA(Glu): step 1/2. Functionally, catalyzes the NADPH-dependent reduction of glutamyl-tRNA(Glu) to glutamate 1-semialdehyde (GSA). This chain is Glutamyl-tRNA reductase, found in Mycobacterium leprae (strain TN).